A 419-amino-acid polypeptide reads, in one-letter code: Carboxypeptidase A1 (419 aa).

A signal peptide spans 1–16; it reads MQGLLILSVLLGAALG. A propeptide spans 17–110 (activation peptide); the sequence is KEDFVGHQVL…QEQMFASQSR (94 aa). Residues 121-414 enclose the Peptidase M14 domain; the sequence is TYHTLDEIYD…LGVLTIMEHT (294 aa). Zn(2+)-binding residues include His179 and Glu182. Substrate is bound by residues 179 to 182, Arg237, and 254 to 255; these read HSRE and NR. Residues Cys248 and Cys271 are joined by a disulfide bond. His306 contacts Zn(2+). Substrate-binding positions include 307–308 and Tyr358; that span reads SY. The Proton donor/acceptor role is filled by Glu380.

This sequence belongs to the peptidase M14 family. As to quaternary structure, monomer. May form a complex with proelastase 2. Requires Zn(2+) as cofactor. Pancreas.

It localises to the secreted. It carries out the reaction Release of a C-terminal amino acid, but little or no action with -Asp, -Glu, -Arg, -Lys or -Pro.. The catalysed reaction is leukotriene C4 + H2O = leukotriene F4 + glycine. Its activity is regulated as follows. Inhibited by interaction with the S.magnifica carboxypeptidase inhibitor SmCI. Functionally, carboxypeptidase that catalyzes the release of a C-terminal amino acid, but has little or no action with -Asp, -Glu, -Arg, -Lys or -Pro. Catalyzes the conversion of leukotriene C4 to leukotriene F4 via the hydrolysis of an amide bond. The sequence is that of Carboxypeptidase A1 (CPA1) from Bos taurus (Bovine).